A 169-amino-acid chain; its full sequence is S-ribosylhomocysteine lyase (169 aa).

The Fe cation site is built by H54, H58, and C129.

This sequence belongs to the LuxS family. As to quaternary structure, homodimer. Fe cation is required as a cofactor.

The enzyme catalyses S-(5-deoxy-D-ribos-5-yl)-L-homocysteine = (S)-4,5-dihydroxypentane-2,3-dione + L-homocysteine. Involved in the synthesis of autoinducer 2 (AI-2) which is secreted by bacteria and is used to communicate both the cell density and the metabolic potential of the environment. The regulation of gene expression in response to changes in cell density is called quorum sensing. Catalyzes the transformation of S-ribosylhomocysteine (RHC) to homocysteine (HC) and 4,5-dihydroxy-2,3-pentadione (DPD). The sequence is that of S-ribosylhomocysteine lyase from Haemophilus ducreyi (strain 35000HP / ATCC 700724).